A 468-amino-acid chain; its full sequence is Chromosomal replication initiator protein DnaA (468 aa).

A domain I, interacts with DnaA modulators region spans residues 1 to 84 (MSSSLWLQCL…RFEVGSRPVS (84 aa)). Residues 80-106 (SRPVSAPKPAPTRTPADVAAESSAPAQ) form a disordered region. A domain II region spans residues 84–131 (SAPKPAPTRTPADVAAESSAPAQLQARKPVHKTWDDDPQAIAAINHRS). The domain III, AAA+ region stretch occupies residues 132-348 (NMNPKHKFDN…GALNRVIANA (217 aa)). 4 residues coordinate ATP: glycine 176, glycine 178, lysine 179, and threonine 180. Residues 349 to 468 (NFTGRPITID…YSNLIRTLSS (120 aa)) are domain IV, binds dsDNA.

The protein belongs to the DnaA family. Oligomerizes as a right-handed, spiral filament on DNA at oriC.

It localises to the cytoplasm. Functionally, plays an essential role in the initiation and regulation of chromosomal replication. ATP-DnaA binds to the origin of replication (oriC) to initiate formation of the DNA replication initiation complex once per cell cycle. Binds the DnaA box (a 9 base pair repeat at the origin) and separates the double-stranded (ds)DNA. Forms a right-handed helical filament on oriC DNA; dsDNA binds to the exterior of the filament while single-stranded (ss)DNA is stabiized in the filament's interior. The ATP-DnaA-oriC complex binds and stabilizes one strand of the AT-rich DNA unwinding element (DUE), permitting loading of DNA polymerase. After initiation quickly degrades to an ADP-DnaA complex that is not apt for DNA replication. Binds acidic phospholipids. This chain is Chromosomal replication initiator protein DnaA, found in Vibrio parahaemolyticus serotype O3:K6 (strain RIMD 2210633).